Here is a 206-residue protein sequence, read N- to C-terminus: N-(5'-phosphoribosyl)anthranilate isomerase (206 aa).

Belongs to the TrpF family.

It catalyses the reaction N-(5-phospho-beta-D-ribosyl)anthranilate = 1-(2-carboxyphenylamino)-1-deoxy-D-ribulose 5-phosphate. The protein operates within amino-acid biosynthesis; L-tryptophan biosynthesis; L-tryptophan from chorismate: step 3/5. This Citrifermentans bemidjiense (strain ATCC BAA-1014 / DSM 16622 / JCM 12645 / Bem) (Geobacter bemidjiensis) protein is N-(5'-phosphoribosyl)anthranilate isomerase.